The sequence spans 335 residues: Ketol-acid reductoisomerase (NADP(+)) (335 aa).

Residues 5-185 (SKIYTDKDSN…GATRAGVIPT (181 aa)) enclose the KARI N-terminal Rossmann domain. Residues 28 to 31 (YGSQ), Ser56, and 86 to 89 (DMVQ) contribute to the NADP(+) site. His111 is a catalytic residue. Position 137 (Gly137) interacts with NADP(+). Residues 186–331 (TFKEETETDL…NQLKDLIQKG (146 aa)) enclose the KARI C-terminal knotted domain. Positions 194, 198, 230, and 234 each coordinate Mg(2+). Residue Ser255 coordinates substrate.

Belongs to the ketol-acid reductoisomerase family. Mg(2+) serves as cofactor.

The enzyme catalyses (2R)-2,3-dihydroxy-3-methylbutanoate + NADP(+) = (2S)-2-acetolactate + NADPH + H(+). It carries out the reaction (2R,3R)-2,3-dihydroxy-3-methylpentanoate + NADP(+) = (S)-2-ethyl-2-hydroxy-3-oxobutanoate + NADPH + H(+). Its pathway is amino-acid biosynthesis; L-isoleucine biosynthesis; L-isoleucine from 2-oxobutanoate: step 2/4. It participates in amino-acid biosynthesis; L-valine biosynthesis; L-valine from pyruvate: step 2/4. Functionally, involved in the biosynthesis of branched-chain amino acids (BCAA). Catalyzes an alkyl-migration followed by a ketol-acid reduction of (S)-2-acetolactate (S2AL) to yield (R)-2,3-dihydroxy-isovalerate. In the isomerase reaction, S2AL is rearranged via a Mg-dependent methyl migration to produce 3-hydroxy-3-methyl-2-ketobutyrate (HMKB). In the reductase reaction, this 2-ketoacid undergoes a metal-dependent reduction by NADPH to yield (R)-2,3-dihydroxy-isovalerate. This Saccharolobus islandicus (strain Y.G.57.14 / Yellowstone #1) (Sulfolobus islandicus) protein is Ketol-acid reductoisomerase (NADP(+)).